The primary structure comprises 235 residues: Small ribosomal subunit protein uS3 (235 aa).

A KH type-2 domain is found at 39 to 107 (VRKFLNKELA…PAQINIAEVK (69 aa)).

The protein belongs to the universal ribosomal protein uS3 family. Part of the 30S ribosomal subunit. Forms a tight complex with proteins S10 and S14.

Its function is as follows. Binds the lower part of the 30S subunit head. Binds mRNA in the 70S ribosome, positioning it for translation. This chain is Small ribosomal subunit protein uS3, found in Actinobacillus pleuropneumoniae serotype 5b (strain L20).